Here is a 191-residue protein sequence, read N- to C-terminus: Protein Ves (191 aa).

This sequence belongs to the Ves family.

This is Protein Ves from Escherichia coli (strain UTI89 / UPEC).